Consider the following 209-residue polypeptide: Na(+)-translocating NADH-quinone reductase subunit D (209 aa).

Helical transmembrane passes span 42–62, 72–92, 103–123, 131–151, and 178–198; these read LVMTIAVTLVTAFSSFFISLI, IIVQMAIIASLVIVVDQILQA, VFVGLIITNCIVMGRAEAYAM, FMDGIGNGLGYGVILVLVGFL, and NGLFLLAPSAFFIIGMLIWGL.

This sequence belongs to the NqrDE/RnfAE family. In terms of assembly, composed of six subunits; NqrA, NqrB, NqrC, NqrD, NqrE and NqrF.

It localises to the cell inner membrane. The catalysed reaction is a ubiquinone + n Na(+)(in) + NADH + H(+) = a ubiquinol + n Na(+)(out) + NAD(+). Functionally, NQR complex catalyzes the reduction of ubiquinone-1 to ubiquinol by two successive reactions, coupled with the transport of Na(+) ions from the cytoplasm to the periplasm. NqrA to NqrE are probably involved in the second step, the conversion of ubisemiquinone to ubiquinol. In Photorhabdus laumondii subsp. laumondii (strain DSM 15139 / CIP 105565 / TT01) (Photorhabdus luminescens subsp. laumondii), this protein is Na(+)-translocating NADH-quinone reductase subunit D.